A 1412-amino-acid chain; its full sequence is MTTKRSLFVRLVPCRCLRGEEETVTTLDYSHCSLEQVPKEIFTFEKTLEELYLDANQIEELPKQLFNCQSLHKLSLPDNDLTTLPASIANLINLRELDVSKNGIQEFPENIKNCKVLTIVEASVNPISKLPDGFSQLLNLTQLYLNDAFLEFLPANFGRLTKLQILELRENQLKMLPKTMNRLTQLERLDLGSNEFTEVPEVLEQLSGLKEFWMDANRLTFIPGFIGSLKQLTYLDVSKNNIEMVEEGISTCENLQDLLLSSNSLQQLPETIGSLKNITTLKIDENQLMYLPDSIGGLISVEELDCSFNEVEALPSSIGQLTNLRTFAADHNYLQQLPPEIGSWKNITVLFLHSNKLETLPEEMGDMQKLKVINLSDNRLKNLPFSFTKLQQLTAMWLSDNQSKPLIPLQKETDSETQKMVLTNYMFPQQPRTEDVMFISDNESFNPSLWEEQRKQRAQVAFECDEDKDEREAPPREGNLKRYPTPYPDELKNMVKTVQTIVHRLKDEETNEDSGRDLKPHEDQQDINKDVGVKTSESTTTVKSKVDEREKYMIGNSVQKISEPEAEISPGSLPVTANMKASENLKHIVNHDDVFEESEELSSDEEMKMAEMRPPLIETSINQPKVVALSNNKKDDTKETDSLSDEVTHNSNQNNSNCSSPSRMSDSVSLNTDSSQDTSLCSPVKQTHIDINSKIRQEDENFNSLLQNGDILNSSTEEKFKAHDKKDFNLPEYDLNVEERLVLIEKSVDSTATADDTHKLDHINMNLNKLITNDTFQPEIMERSKTQDIVLGTSFLSINSKEETEHLENGNKYPNLESVNKVNGHSEETSQSPNRTEPHDSDCSVDLGISKSTEDLSPQKSGPVGSVVKSHSITNMEIGGLKIYDILSDNGPQQPSTTVKITSAVDGKNIVRSKSATLLYDQPLQVFTGSSSSSDLISGTKAIFKFDSNHNPEEPNIIRGPTSGPQSAPQIYGPPQYNIQYSSSAAVKDTLWHSKQNPQIDHASFPPQLLPRSESTENQSYAKHSANMNFSNHNNVRANTAYHLHQRLGPARHGEMWAISPNDRLIPAVTRSTIQRQSSVSSTASVNLGDPGSTRRAQIPEGDYLSYREFHSAGRTPPMMPGSQRPLSARTYSIDGPNASRPQSARPSINEIPERTMSVSDFNYSRTSPSKRPNARVGSEHSLLDPPGKSKVPRDWREQVLRHIEAKKLEKKHPQTSSSGDPCQDGIFISGQQNYSSATLSHKDVPPDSLMKMPLSNGQMGQPLRPQANYSQIHHPPQASVARHPSREQLIDYLMLKVAHQPPYTQPHCSPRQGHELAKQEIRVRVEKDPELGFSISGGVGGRGNPFRPDDDGIFVTRVQPEGPASKLLQPGDKIIQANGYSFINIEHGQAVSLLKTFQNTVELIIVREVSS.

LRR repeat units lie at residues 23 to 44 (TVTT…IFTF), 47 to 68 (TLEE…LFNC), 70 to 91 (SLHK…IANL), 93 to 114 (NLRE…IKNC), 116 to 137 (VLTI…FSQL), 139 to 161 (NLTQ…GRLT), 162 to 183 (KLQI…MNRL), 185 to 206 (QLER…LEQL), 208 to 229 (GLKE…IGSL), 231 to 252 (QLTY…ISTC), 254 to 275 (NLQD…IGSL), 277 to 298 (NITT…IGGL), 300 to 321 (SVEE…IGQL), 323 to 344 (NLRT…IGSW), 346 to 367 (NITV…MGDM), 369 to 391 (KLKV…TKLQ), and 392 to 413 (QLTA…QKET). Phosphoserine is present on residues serine 440 and serine 444. 2 disordered regions span residues 464 to 489 (CDED…PYPD) and 506 to 542 (KDEE…TTTV). Over residues 470–480 (EREAPPREGNL) the composition is skewed to basic and acidic residues. Residue tyrosine 483 is modified to Phosphotyrosine. Phosphothreonine is present on threonine 485. Residues 506 to 532 (KDEETNEDSGRDLKPHEDQQDINKDVG) show a composition bias toward basic and acidic residues. Low complexity predominate over residues 533 to 542 (VKTSESTTTV). Phosphoserine is present on residues serine 569, serine 598, serine 602, serine 603, and serine 620. Positions 615 to 681 (PLIETSINQP…TDSSQDTSLC (67 aa)) are disordered. Over residues 632 to 641 (NKKDDTKETD) the composition is skewed to basic and acidic residues. Over residues 650–662 (NSNQNNSNCSSPS) the composition is skewed to low complexity. Over residues 663 to 681 (RMSDSVSLNTDSSQDTSLC) the composition is skewed to polar residues. Phosphoserine is present on serine 715. A disordered region spans residues 803–867 (ETEHLENGNK…PQKSGPVGSV (65 aa)). Positions 817–835 (ESVNKVNGHSEETSQSPNR) are enriched in polar residues. Phosphoserine occurs at positions 852, 857, and 872. The residue at position 917 (threonine 917) is a Phosphothreonine. At tyrosine 920 the chain carries Phosphotyrosine. Serine 931 is subject to Phosphoserine. Tyrosine 972 bears the Phosphotyrosine mark. Disordered regions lie at residues 997–1021 (NPQI…NQSY) and 1075–1192 (QRQS…KSKV). The segment covering 1075–1086 (QRQSSVSSTASV) has biased composition (polar residues). A Phosphotyrosine modification is found at tyrosine 1104. Over residues 1157–1171 (MSVSDFNYSRTSPSK) the composition is skewed to polar residues. Residues serine 1158, serine 1179, and serine 1286 each carry the phosphoserine modification. A PDZ domain is found at 1321–1410 (EIRVRVEKDP…TVELIIVREV (90 aa)).

The protein belongs to the LAP (LRR and PDZ) protein family. As to quaternary structure, interacts with ERBB2, BPAG1 and ITGB4. May favor the localization of ERBB2, by restricting its presence to the basolateral membrane of epithelial cells. Also found to interact with ARVCF and delta catenin. Interacts (via C-terminus) with DST Isoform 3 (via N-terminus). Interacts with NOD2 (via CARD domain). In terms of tissue distribution, highly expressed in brain, heart, kidney, muscle and stomach, followed by liver, spleen and intestine.

It localises to the cell junction. Its subcellular location is the hemidesmosome. The protein resides in the nucleus membrane. The protein localises to the basolateral cell membrane. Its function is as follows. Acts as an adapter for the receptor ERBB2, in epithelia. By binding the unphosphorylated 'Tyr-1248' of receptor ERBB2, it may contribute to stabilize this unphosphorylated state. Inhibits NOD2-dependent NF-kappa-B signaling and pro-inflammatory cytokine secretion. In Homo sapiens (Human), this protein is Erbin.